An 80-amino-acid polypeptide reads, in one-letter code: Cell division activator CedA (80 aa).

Belongs to the CedA family.

Activates the cell division inhibited by chromosomal DNA over-replication. This is Cell division activator CedA from Citrobacter koseri (strain ATCC BAA-895 / CDC 4225-83 / SGSC4696).